Here is a 271-residue protein sequence, read N- to C-terminus: Neurexophilin-1 (271 aa).

Positions 1 to 21 are cleaved as a signal peptide; sequence MQAACWYVLLLLQPTVYLVTC. Positions 22-97 are II; it reads ANLTNGGKSE…WDWLRNSTDL (76 aa). N-linked (GlcNAc...) asparagine glycosylation is found at N23, N68, N93, N146, N156, and N162. An III region spans residues 98-176; it reads QEPRPRAKRR…LVPPTKIVEF (79 aa). The interval 177 to 185 is IV (linker domain); that stretch reads DLAQQTVID. The tract at residues 186–271 is v (Cys-rich); that stretch reads AKDSKSFNCR…HSDTPYFPSG (86 aa).

The protein belongs to the neurexophilin family. Post-translationally, may be proteolytically processed at the boundary between the N-terminal non-conserved and the central conserved domain in neuron-like cells. Brain, only in a scattered subpopulation of neurons that probably represent inhibitory interneurons.

Its subcellular location is the secreted. May be signaling molecules that resemble neuropeptides. Ligand for alpha-neurexins. This chain is Neurexophilin-1 (Nxph1), found in Mus musculus (Mouse).